A 130-amino-acid chain; its full sequence is MEAILMIGVLALCVIFLLSGRNNKKKQEARELEDYLEDLNKRVVQRTQILSELNEVISNRSIDKTVNLSACEVAVLDLYEQSNIRIPSDIIEDLVNQRLQSEQEVLNYIETQRTYWKLENQKKLYRGSLK.

The chain crosses the membrane as a helical span at residues 1–20; it reads MEAILMIGVLALCVIFLLSG. A coiled-coil region spans residues 30–60; sequence RELEDYLEDLNKRVVQRTQILSELNEVISNR. The tract at residues 70–130 is DNA-binding; the sequence is ACEVAVLDLY…QKKLYRGSLK (61 aa).

This sequence belongs to the phi29likevirus gp16.7 family. Homodimer; homooligomer. Interacts with DNA; one dsDNA binding subunit is constituted by three p16.7. dimers.

It localises to the host cell membrane. In terms of biological role, binds to the long stretches of ssDNA of the viral DNA replication intermediates created during the protein-primed mechanism of replication of the viral genome and attaches the viral DNA to the membrane of the infected cells. Required for the redistribution of replicating viral DNA from the initial replication site to membrane-associated sites surrounding the nucleoid. Required for the second pull step of DNA ejection. This is DNA replication protein 16.7 (16.7) from Bacillus subtilis (Bacteriophage phi-29).